A 161-amino-acid chain; its full sequence is Phosphopantetheine adenylyltransferase (161 aa).

A substrate-binding site is contributed by Ser-9. ATP contacts are provided by residues 9–10 (SF) and His-17. Lys-41, Leu-73, and Arg-87 together coordinate substrate. ATP-binding positions include 88-90 (GLR), Glu-98, and 123-129 (YTFISSS).

This sequence belongs to the bacterial CoaD family. In terms of assembly, homohexamer. The cofactor is Mg(2+).

The protein resides in the cytoplasm. It catalyses the reaction (R)-4'-phosphopantetheine + ATP + H(+) = 3'-dephospho-CoA + diphosphate. The protein operates within cofactor biosynthesis; coenzyme A biosynthesis; CoA from (R)-pantothenate: step 4/5. Its function is as follows. Reversibly transfers an adenylyl group from ATP to 4'-phosphopantetheine, yielding dephospho-CoA (dPCoA) and pyrophosphate. The polypeptide is Phosphopantetheine adenylyltransferase (Syntrophomonas wolfei subsp. wolfei (strain DSM 2245B / Goettingen)).